We begin with the raw amino-acid sequence, 184 residues long: Ribosome-recycling factor (184 aa).

Belongs to the RRF family.

It is found in the cytoplasm. In terms of biological role, responsible for the release of ribosomes from messenger RNA at the termination of protein biosynthesis. May increase the efficiency of translation by recycling ribosomes from one round of translation to another. This is Ribosome-recycling factor from Desulfotalea psychrophila (strain LSv54 / DSM 12343).